The chain runs to 158 residues: uncharacterized protein (158 aa).

2 disordered regions span residues 1 to 86 (MDFR…DHWW) and 138 to 158 (ASQV…LLGF). Positions 7–76 (SPTTCTTPAS…PTPASSGSAA (70 aa)) are enriched in low complexity.

This is an uncharacterized protein from Homo sapiens (Human).